We begin with the raw amino-acid sequence, 231 residues long: RNA pyrophosphohydrolase (231 aa).

In terms of domain architecture, Nudix hydrolase spans 6–149; it reads GFRPNVGIIL…KRDVYQLALT (144 aa). The Nudix box signature appears at 38–59; sequence GGIKYGETPVQAMYRELHEETG. Positions 157–190 are disordered; sequence RPQPRTERPGGHHHGQRYPRMASSVNAPPGASMA.

This sequence belongs to the Nudix hydrolase family. RppH subfamily. It depends on a divalent metal cation as a cofactor.

Functionally, accelerates the degradation of transcripts by removing pyrophosphate from the 5'-end of triphosphorylated RNA, leading to a more labile monophosphorylated state that can stimulate subsequent ribonuclease cleavage. This chain is RNA pyrophosphohydrolase, found in Paraburkholderia phymatum (strain DSM 17167 / CIP 108236 / LMG 21445 / STM815) (Burkholderia phymatum).